We begin with the raw amino-acid sequence, 164 residues long: Thiol peroxidase (164 aa).

A Thioredoxin domain is found at 18–163 (VKTGETAPEF…FESALEAYRN (146 aa)). The active-site Cysteine sulfenic acid (-SOH) intermediate is Cys-60. Cys-60 and Cys-93 form a disulfide bridge.

This sequence belongs to the peroxiredoxin family. Tpx subfamily. As to quaternary structure, homodimer.

The catalysed reaction is a hydroperoxide + [thioredoxin]-dithiol = an alcohol + [thioredoxin]-disulfide + H2O. Its function is as follows. Thiol-specific peroxidase that catalyzes the reduction of hydrogen peroxide and organic hydroperoxides to water and alcohols, respectively. Plays a role in cell protection against oxidative stress by detoxifying peroxides. The sequence is that of Thiol peroxidase from Staphylococcus saprophyticus subsp. saprophyticus (strain ATCC 15305 / DSM 20229 / NCIMB 8711 / NCTC 7292 / S-41).